We begin with the raw amino-acid sequence, 192 residues long: UPF0149 protein KPN78578_32810 (192 aa).

The protein belongs to the UPF0149 family.

This Klebsiella pneumoniae subsp. pneumoniae (strain ATCC 700721 / MGH 78578) protein is UPF0149 protein KPN78578_32810.